A 442-amino-acid polypeptide reads, in one-letter code: Phosphoglucosamine mutase (442 aa).

Catalysis depends on S103, which acts as the Phosphoserine intermediate. S103, D241, D243, and D245 together coordinate Mg(2+). S103 carries the phosphoserine modification.

The protein belongs to the phosphohexose mutase family. Mg(2+) serves as cofactor. Post-translationally, activated by phosphorylation.

It catalyses the reaction alpha-D-glucosamine 1-phosphate = D-glucosamine 6-phosphate. Its function is as follows. Catalyzes the conversion of glucosamine-6-phosphate to glucosamine-1-phosphate. This is Phosphoglucosamine mutase from Deinococcus deserti (strain DSM 17065 / CIP 109153 / LMG 22923 / VCD115).